A 712-amino-acid polypeptide reads, in one-letter code: Polyadenylation factor subunit 2 (712 aa).

Residues methionine 1 to histidine 37 are disordered. WD repeat units follow at residues lysine 131–isoleucine 170, valine 173–glutamine 213, glycine 214–serine 253, glycine 256–threonine 295, serine 298–valine 337, glycine 340–proline 380, and alanine 387–glutamate 426. Disordered regions lie at residues threonine 446–valine 473 and lysine 489–arginine 712. 2 stretches are compositionally biased toward gly residues: residues alanine 460–aspartate 469 and threonine 494–glycine 504. Positions glutamine 533–arginine 545 are enriched in low complexity. Over residues phenylalanine 565 to proline 592 the composition is skewed to basic and acidic residues. Pro residues-rich tracts occupy residues glycine 603–glycine 612 and proline 619–proline 671. A compositionally biased stretch (gly residues) spans glycine 678–arginine 712.

The protein resides in the nucleus. Its function is as follows. Required for 3'-end cleavage and polyadenylation of pre-mRNAs. Also involved in chromosome segregation where it has a role in chromosome attachment to the mitotic spindle. The chain is Polyadenylation factor subunit 2 (PFS2) from Cryptococcus neoformans var. neoformans serotype D (strain JEC21 / ATCC MYA-565) (Filobasidiella neoformans).